Reading from the N-terminus, the 327-residue chain is DNA-directed RNA polymerase subunit alpha (327 aa).

An alpha N-terminal domain (alpha-NTD) region spans residues 1-233 (MQGSVTEFLK…EQLEAFVDLR (233 aa)). The tract at residues 247 to 327 (FDPVLLRPVD…NWPPLGFIDK (81 aa)) is alpha C-terminal domain (alpha-CTD).

The protein belongs to the RNA polymerase alpha chain family. Homodimer. The RNAP catalytic core consists of 2 alpha, 1 beta, 1 beta' and 1 omega subunit. When a sigma factor is associated with the core the holoenzyme is formed, which can initiate transcription.

The catalysed reaction is RNA(n) + a ribonucleoside 5'-triphosphate = RNA(n+1) + diphosphate. Its function is as follows. DNA-dependent RNA polymerase catalyzes the transcription of DNA into RNA using the four ribonucleoside triphosphates as substrates. In Baumannia cicadellinicola subsp. Homalodisca coagulata, this protein is DNA-directed RNA polymerase subunit alpha.